A 463-amino-acid chain; its full sequence is Probable diacyglycerol O-acyltransferase tgs1 (463 aa).

The Proton acceptor role is filled by His137.

This sequence belongs to the long-chain O-acyltransferase family.

It carries out the reaction an acyl-CoA + a 1,2-diacyl-sn-glycerol = a triacyl-sn-glycerol + CoA. The protein operates within glycerolipid metabolism; triacylglycerol biosynthesis. Catalyzes the terminal and only committed step in triacylglycerol synthesis by using diacylglycerol and fatty acyl CoA as substrates. Required for storage lipid synthesis. This Mycobacterium tuberculosis (strain CDC 1551 / Oshkosh) protein is Probable diacyglycerol O-acyltransferase tgs1 (tgs1).